Reading from the N-terminus, the 1251-residue chain is MPKINSFNYNDPVNDRTILYIKPGGCQEFYKSFNIMKNIWIIPERNVIGTTPQDFHPPTSLKNGDSSYYDPNYLQSDEEKDRFLKIVTKIFNRINNNLSGGILLEELSKANPYLGNDNTPDNQFHIGDASAVEIKFSNGSQDILLPNVIIMGAEPDLFETNSSNISLRNNYMPSNHRFGSIAIVTFSPEYSFRFNDNCMNEFIQDPALTLMHELIHSLHGLYGAKGITTKYTITQKQNPLITNIRGTNIEEFLTFGGTDLNIITSAQSNDIYTNLLADYKKIASKLSKVQVSNPLLNPYKDVFEAKYGLDKDASGIYSVNINKFNDIFKKLYSFTEFDLRTKFQVKCRQTYIGQYKYFKLSNLLNDSIYNISEGYNINNLKVNFRGQNANLNPRIITPITGRGLVKKIIRFCKNIVSVKGIRKSICIEINNGELFFVASENSYNDDNINTPKEIDDTVTSNNNYENDLDQVILNFNSESAPGLSDEKLNLTIQNDAYIPKYDSNGTSDIEQHDVNELNVFFYLDAQKVPEGENNVNLTSSIDTALLEQPKIYTFFSSEFINNVNKPVQAALFVSWIQQVLVDFTTEANQKSTVDKIADISIVVPYIGLALNIGNEAQKGNFKDALELLGAGILLEFEPELLIPTILVFTIKSFLGSSDNKNKVIKAINNALKERDEKWKEVYSFIVSNWMTKINTQFNKRKEQMYQALQNQVNAIKTIIESKYNSYTLEEKNELTNKYDIKQIENELNQKVSIAMNNIDRFLTESSISYLMKIINEVKINKLREYDENVKTYLLNYIIQHGSILGESQQELNSMVTDTLNNSIPFKLSSYTDDKILISYFNKFFKRIKSSSVLNMRYKNDKYVDTSGYDSNININGDVYKYPTNKNQFGIYNDKLSEVNISQNDYIIYDNKYKNFSISFWVRIPNYDNKIVNVNNEYTIINCMRDNNSGWKVSLNHNEIIWTFEDNRGINQKLAFNYGNANGISDYINKWIFVTITNDRLGDSKLYINGNLIDQKSILNLGNIHVSDNILFKIVNCSYTRYIGIRYFNIFDKELDETEIQTLYSNEPNTNILKDFWGNYLLYDKEYYLLNVLKPNNFIDRRKDSTLSINNIRSTILLANRLYSGIKVKIQRVNNSSTNDNLVRKNDQVYINFVASKTHLFPLYADTATTNKEKTIKISSSGNRFNQVVVMNSVGNCTMNFKNNNGNNIGLLGFKADTVVASTWYYTHMRDHTNSNGCFWNFISEEHGWQEK.

Residue histidine 212 coordinates Zn(2+). Glutamate 213 functions as the Proton acceptor in the catalytic mechanism. Zn(2+)-binding residues include histidine 216 and glutamate 251. The cysteines at positions 412 and 426 are disulfide-linked. The tract at residues 423-819 (KSICIEINNG…ELNSMVTDTL (397 aa)) is translocation domain (TD). Positions 466–515 (NDLDQVILNFNSESAPGLSDEKLNLTIQNDAYIPKYDSNGTSDIEQHDVN) are belt. Residues 845–1067 (KRIKSSSVLN…EIQTLYSNEP (223 aa)) form an N-terminus of receptor binding domain (N-RBD) region. Residues 850–1251 (SSVLNMRYKN…ISEEHGWQEK (402 aa)) are receptor-binding domain (TD). A C-terminus of receptor binding domain (C-RBD) region spans residues 1068–1251 (NTNILKDFWG…ISEEHGWQEK (184 aa)). A Host ganglioside-binding motif motif is present at residues 1221–1224 (STWY).

It belongs to the peptidase M27 family. As to quaternary structure, heterodimer; disulfide-linked heterodimer of a light chain (LC) and a heavy chain (HC); cleavage occurs after bacterial export by host proteases. The LC has the proteolytic/pharmacological activity, while the N- and C-terminal of the HC mediate channel formation and toxin binding, respectively. Oligomerizes in the presence of coreceptor ganglioside GT1b between pH 4.4 and 8.0; it might oligomerize on host cell surface. Interacts with host synaptic vesicle glycoproteins SV2A and SV2B. HC interacts with a complex including at least host SV2 and synaptotagmin-1 (SYT1); copurification depends on glycosylation of SV2. Zn(2+) serves as cofactor.

It is found in the secreted. The protein localises to the host cytoplasm. It localises to the host cytosol. The protein resides in the host synapse. Its subcellular location is the host presynaptic cell membrane. It is found in the host cytoplasmic vesicle. The protein localises to the host secretory vesicle. It localises to the host synaptic vesicle membrane. The catalysed reaction is Limited hydrolysis of proteins of the neuroexocytosis apparatus, synaptobrevins, SNAP25 or syntaxin. No detected action on small molecule substrates.. With respect to regulation, proteolysis of SNAP25 by whole toxin inhibited by dipicolinic acid, 1,10-phenanthroline and EDTA. In terms of biological role, botulinum toxin causes flaccid paralysis by inhibiting neurotransmitter (acetylcholine) release from the presynaptic membranes of nerve terminals of eukaryotic host skeletal and autonomic nervous system, with frequent heart or respiratory failure. Precursor of botulinum neurotoxin E which has 2 coreceptors; complex polysialylated gangliosides found on neural tissue and specific membrane-anchored proteins found in synaptic vesicles. Receptor proteins are exposed on host presynaptic cell membrane during neurotransmitter release, when the toxin heavy chain (HC) binds to them. Upon synaptic vesicle recycling the toxin is taken up via the endocytic pathway. When the pH of the toxin-containing endosome drops a structural rearrangement occurs so that the N-terminus of the HC forms pores that allows the light chain (LC) to translocate into the cytosol. Once in the cytosol the disulfide bond linking the 2 subunits is reduced and LC cleaves its target protein on synaptic vesicles, preventing their fusion with the cytoplasmic membrane and thus neurotransmitter release. Electrical stimulation increases uptake of toxin, probably by transiently exposing a receptor found in eukaryotic target synaptic vesicles. Uses the large lumenal domain of synaptic vesicle glycoproteins 2A and 2B (SV2A and SV2B) but not SV2C as receptor; an N-linked glycan of SV2 is essential for receptor function. Host cell gangliosides are also required for neurotoxin uptake and full toxicity. BoNT/E is a 'coincidence detector'; it requires simultaneous binding to coreceptor GT1b and low pH to transform into a membrane-bound, oligomeric channel. Requires trypsinization and reduction before it can be used in assays in vitro. Has proteolytic activity. After translocation into the eukaryotic host cytosol, inhibits neurotransmitter release by acting as a zinc endopeptidase that catalyzes the hydrolysis of the '180-Arg-|-Ile-181' bond in SNAP25. Hydrolyzes the '185-Arg-|-Ile-186' bond of mouse SNAP23, but not in human which has a different sequence. Recognizes the '146-Met--Asp-186' region of SNAP25. The reaction mechanism probably has a nucleophilic water held in place by Glu-213. Reduction of the interchain disulfide bond occurs in the host cytosol and probably prevents retrotranslocation into the synaptic vesicle. Functionally, responsible for host epithelial cell transcytosis, host nerve cell targeting and translocation of light chain (LC) into host cytosol. Composed of 3 subdomains; the translocation domain (TD), and N-terminus and C-terminus of the receptor-binding domain (RBD). The RBD is responsible for the adherence of the toxin to the cell surface. It probably simultaneously recognizes 2 coreceptors; polysialated gangliosides and either of the receptor proteins SV2A and SV2B in close proximity on host synaptic vesicles. The N-terminus of the TD wraps an extended belt around the perimeter of the light chain (LC), protecting Zn(2+) in the active site. The belt may also prevent premature LC dissociation from the translocation channel and protect toxin prior to translocation. The TD inserts into synaptic vesicle membrane to allow translocation into the host cytosol. Responsible for adherence of the toxin to the cell surface; HC alone prevents uptake of whole toxin by neural cells, and delays paralysis onset by 154%. Significantly decreases uptake and toxicity of whole BoNT/E, but also interferes with uptake of BoNT/C; binds GT1b in vitro. Binds to synaptic vesicle glycoproteins SV2A and SV2B which serve as coreceptors with gangliosides. Interaction with SV2 proteins requires SV2 glycosylation. HC alone significantly decreases uptake and toxicity of whole BoNT/E. HC is responsible for translocation of LC into the host cytosol; an intact disulfide bond between the 2 subunits is required for translocation, which is reduced upon contact with the host cytosol. The sequence is that of Botulinum neurotoxin type E from Clostridium botulinum.